The chain runs to 265 residues: Putative hydro-lyase PA14_37210 (265 aa).

Belongs to the D-glutamate cyclase family.

The sequence is that of Putative hydro-lyase PA14_37210 from Pseudomonas aeruginosa (strain UCBPP-PA14).